Consider the following 189-residue polypeptide: uncharacterized protein (189 aa).

An N-terminal signal peptide occupies residues 1-19; sequence MKRVLFFLLMIFVSFGVIA.

This is an uncharacterized protein from Escherichia coli (strain K12).